Consider the following 1581-residue polypeptide: Ankyrin repeat domain-containing protein 26 (1581 aa).

The tract at residues 1-22 (MKKIFGFRSKGPSPLGPSARPR) is disordered. Position 13 is a phosphoserine (Ser13). 5 ANK repeats span residues 46 to 76 (KDMGKIHKAASVGDVAKVQHILILGKSGVND), 80 to 109 (KDRTALHLACAYGHPEVVTLLVERKCEIDA), 113 to 142 (ESSTALIKAVQCQEEECAAILLDHGADPNV), 146 to 175 (SGNTALHYAVYSENTSMAAKLLAHNANIEA), and 179 to 208 (DDLTPMLLAVKENKQHIVEFLVKKKASIHA). Disordered regions lie at residues 225 to 270 (RLQR…FDNK), 299 to 343 (LDNG…PVEG), 361 to 381 (SASQEQPNHDNLTRADGWHKS), and 488 to 652 (VLNK…QTAA). A compositionally biased stretch (polar residues) spans 229–250 (SENSNPVDNGSEDGSLTRSYNT). Ser239 and Ser260 each carry phosphoserine. The span at 308-319 (SDSPSESEDAIE) shows a compositional bias: acidic residues. The span at 327-337 (RVQTLSPSRQS) shows a compositional bias: polar residues. Basic and acidic residues predominate over residues 367–381 (PNHDNLTRADGWHKS). Polar residues predominate over residues 491–504 (KTETVGMTDAQTFK). Composition is skewed to basic and acidic residues over residues 505 to 516 (SEPESVSREEQT), 524 to 538 (SQQKVEEKRKYKNNE), and 585 to 601 (KEAKKMENEKWVSREPA). The residue at position 511 (Ser511) is a Phosphoserine. Coiled coils occupy residues 715–845 (RSHC…NARM), 876–1345 (HEKE…MVEH), 1396–1470 (RSQM…RSLL), and 1521–1550 (LTKMHQELEKSINRELKEATAELESEFCRV).

As to quaternary structure, interacts with TRIO. Interacts with GPS2. Interacts with CCDC85B. Interacts with HMMR. Widely expressed. Expressed in the arcuate and ventromedial nuclei within the hypothalamus and in the ependyma and the circumventricular organs (at protein level).

The protein resides in the cytoplasm. It is found in the cytosol. Acts as a regulator of adipogenesis. Involved in the regulation of the feeding behavior. This is Ankyrin repeat domain-containing protein 26 (Ankrd26) from Mus musculus (Mouse).